A 380-amino-acid polypeptide reads, in one-letter code: uncharacterized protein (380 aa).

This is an uncharacterized protein from Homo sapiens (Human).